We begin with the raw amino-acid sequence, 199 residues long: Small ribosomal subunit protein eS1 (199 aa).

The protein belongs to the eukaryotic ribosomal protein eS1 family.

This is Small ribosomal subunit protein eS1 from Pyrococcus abyssi (strain GE5 / Orsay).